Consider the following 117-residue polypeptide: Large ribosomal subunit protein bL19 (117 aa).

It belongs to the bacterial ribosomal protein bL19 family.

Functionally, this protein is located at the 30S-50S ribosomal subunit interface and may play a role in the structure and function of the aminoacyl-tRNA binding site. This is Large ribosomal subunit protein bL19 from Shewanella baltica (strain OS155 / ATCC BAA-1091).